The sequence spans 366 residues: tRNA N6-adenosine threonylcarbamoyltransferase (366 aa).

Fe cation contacts are provided by His-119 and His-123. Substrate-binding positions include 142–146 (LVSGG), Asp-175, Gly-188, Asp-192, and Asn-281. Asp-309 lines the Fe cation pocket.

Belongs to the KAE1 / TsaD family. Fe(2+) serves as cofactor.

Its subcellular location is the cytoplasm. The enzyme catalyses L-threonylcarbamoyladenylate + adenosine(37) in tRNA = N(6)-L-threonylcarbamoyladenosine(37) in tRNA + AMP + H(+). Functionally, required for the formation of a threonylcarbamoyl group on adenosine at position 37 (t(6)A37) in tRNAs that read codons beginning with adenine. Is involved in the transfer of the threonylcarbamoyl moiety of threonylcarbamoyl-AMP (TC-AMP) to the N6 group of A37, together with TsaE and TsaB. TsaD likely plays a direct catalytic role in this reaction. The protein is tRNA N6-adenosine threonylcarbamoyltransferase of Synechococcus sp. (strain JA-3-3Ab) (Cyanobacteria bacterium Yellowstone A-Prime).